The following is a 190-amino-acid chain: Protein GrpE (190 aa).

The span at 1-10 (MKKHVTEEQK) shows a compositional bias: basic and acidic residues. The tract at residues 1–42 (MKKHVTEEQKTSAAPEAEQASPESSAAEAATPEERISRLEEQ) is disordered. Positions 12–30 (SAAPEAEQASPESSAAEAA) are enriched in low complexity. A compositionally biased stretch (basic and acidic residues) spans 32-42 (PEERISRLEEQ).

It belongs to the GrpE family. As to quaternary structure, homodimer.

Its subcellular location is the cytoplasm. Functionally, participates actively in the response to hyperosmotic and heat shock by preventing the aggregation of stress-denatured proteins, in association with DnaK and GrpE. It is the nucleotide exchange factor for DnaK and may function as a thermosensor. Unfolded proteins bind initially to DnaJ; upon interaction with the DnaJ-bound protein, DnaK hydrolyzes its bound ATP, resulting in the formation of a stable complex. GrpE releases ADP from DnaK; ATP binding to DnaK triggers the release of the substrate protein, thus completing the reaction cycle. Several rounds of ATP-dependent interactions between DnaJ, DnaK and GrpE are required for fully efficient folding. The protein is Protein GrpE of Pelobacter propionicus (strain DSM 2379 / NBRC 103807 / OttBd1).